The chain runs to 410 residues: Homeobox protein Hox-A3a (410 aa).

A disordered region spans residues 79-126; the sequence is VTDTSDNKQPPTAPSGPSSPSSLNQIPNIDSAAKNPVHVSPTPSTRKH. Residues 127–132 carry the Antp-type hexapeptide motif; sequence IFPWMK. Positions 163–222 form a DNA-binding region, homeobox; sequence SKRARTAYTSAQLVELEKEFHFNRYLCRPRRVEMANLLNLTERQIKIWFQNRRMKYKKDQ. Residues 222-249 form a disordered region; sequence QKGLGMMPSPGAQSPHSPVSLSSGGGGG.

This sequence belongs to the Antp homeobox family.

It is found in the nucleus. In terms of biological role, sequence-specific transcription factor which is part of a developmental regulatory system that provides cells with specific positional identities on the anterior-posterior axis. The sequence is that of Homeobox protein Hox-A3a (hoxa3a) from Danio rerio (Zebrafish).